The following is a 190-amino-acid chain: Peptide methionine sulfoxide reductase MsrA (190 aa).

Cys21 is a catalytic residue.

This sequence belongs to the MsrA Met sulfoxide reductase family.

It carries out the reaction L-methionyl-[protein] + [thioredoxin]-disulfide + H2O = L-methionyl-(S)-S-oxide-[protein] + [thioredoxin]-dithiol. It catalyses the reaction [thioredoxin]-disulfide + L-methionine + H2O = L-methionine (S)-S-oxide + [thioredoxin]-dithiol. Has an important function as a repair enzyme for proteins that have been inactivated by oxidation. Catalyzes the reversible oxidation-reduction of methionine sulfoxide in proteins to methionine. This is Peptide methionine sulfoxide reductase MsrA from Polynucleobacter asymbioticus (strain DSM 18221 / CIP 109841 / QLW-P1DMWA-1) (Polynucleobacter necessarius subsp. asymbioticus).